The sequence spans 608 residues: DNA ligase (608 aa).

Glu266 is an ATP binding site. Residue Lys268 is the N6-AMP-lysine intermediate of the active site. ATP is bound by residues Arg273, Arg288, Glu318, Phe358, Arg435, and Lys441.

It belongs to the ATP-dependent DNA ligase family. Mg(2+) is required as a cofactor. Mn(2+) serves as cofactor.

It catalyses the reaction ATP + (deoxyribonucleotide)n-3'-hydroxyl + 5'-phospho-(deoxyribonucleotide)m = (deoxyribonucleotide)n+m + AMP + diphosphate.. The enzyme catalyses ADP + (deoxyribonucleotide)n-3'-hydroxyl + 5'-phospho-(deoxyribonucleotide)m = (deoxyribonucleotide)n+m + AMP + phosphate.. It carries out the reaction GTP + (deoxyribonucleotide)n-3'-hydroxyl + 5'-phospho-(deoxyribonucleotide)m = (deoxyribonucleotide)n+m + GMP + diphosphate.. DNA ligase that seals nicks in double-stranded DNA during DNA replication, DNA recombination and DNA repair. Can use ATP, ADP and GTP, but not CTP, TTP or NAD(+). This Hyperthermus butylicus (strain DSM 5456 / JCM 9403 / PLM1-5) protein is DNA ligase.